The primary structure comprises 158 residues: Putative peptidoglycan-binding-like protein (158 aa).

The first 24 residues, 1–24 (MRSPKVKFLTIFTFCIFITKMSFA), serve as a signal peptide directing secretion.

The protein belongs to the IagB/IpgF/P19 family.

The protein resides in the periplasm. The sequence is that of Putative peptidoglycan-binding-like protein (pbl) from Escherichia coli (strain K12).